Reading from the N-terminus, the 338-residue chain is Mitoferrin-1 (338 aa).

A disordered region spans residues M1–E37. Solcar repeat units lie at residues A43–T131, N141–Q225, and Y232–I326. The next 6 membrane-spanning stretches (helical) occupy residues V45–Y64, G106–Y125, H143–N162, S200–Y219, P234–T253, and G301–Y320.

This sequence belongs to the mitochondrial carrier (TC 2.A.29) family. Interacts with ACB10; this interaction stabilizes SLC25A37 and enhances the function of SLC25A37 to import mitochondrial iron during erythroid differentiation. As to expression, highly expressed in hematopoietic organs, fetal liver, bone marrow and spleen.

The protein localises to the mitochondrion inner membrane. It carries out the reaction Fe(2+)(in) = Fe(2+)(out). Functionally, mitochondrial iron transporter that specifically mediates iron uptake in developing erythroid cells, thereby playing an essential role in heme biosynthesis. This is Mitoferrin-1 (Slc25a37) from Mus musculus (Mouse).